We begin with the raw amino-acid sequence, 565 residues long: Mannosyl-oligosaccharide 1,2-alpha-mannosidase (565 aa).

A disulfide bond links Cys-320 and Cys-363. Catalysis depends on Glu-378, which acts as the Proton donor. Thr-501 serves as a coordination point for Ca(2+). Composition is skewed to basic and acidic residues over residues 526 to 538 and 550 to 565; these read NEKAQMRESKVID and KSADQEAKEIIEEIAG. A disordered region spans residues 526-565; sequence NEKAQMRESKVIDKSNLPEAQPVDKSADQEAKEIIEEIAG.

This sequence belongs to the glycosyl hydrolase 47 family. The cofactor is Ca(2+).

It carries out the reaction N(4)-(alpha-D-Man-(1-&gt;2)-alpha-D-Man-(1-&gt;2)-alpha-D-Man-(1-&gt;3)-[alpha-D-Man-(1-&gt;2)-alpha-D-Man-(1-&gt;3)-[alpha-D-Man-(1-&gt;2)-alpha-D-Man-(1-&gt;6)]-alpha-D-Man-(1-&gt;6)]-beta-D-Man-(1-&gt;4)-beta-D-GlcNAc-(1-&gt;4)-beta-D-GlcNAc)-L-asparaginyl-[protein] (N-glucan mannose isomer 9A1,2,3B1,2,3) + 4 H2O = N(4)-(alpha-D-Man-(1-&gt;3)-[alpha-D-Man-(1-&gt;3)-[alpha-D-Man-(1-&gt;6)]-alpha-D-Man-(1-&gt;6)]-beta-D-Man-(1-&gt;4)-beta-D-GlcNAc-(1-&gt;4)-beta-D-GlcNAc)-L-asparaginyl-[protein] (N-glucan mannose isomer 5A1,2) + 4 beta-D-mannose. It catalyses the reaction N(4)-(alpha-D-Man-(1-&gt;2)-alpha-D-Man-(1-&gt;2)-alpha-D-Man-(1-&gt;3)-[alpha-D-Man-(1-&gt;3)-[alpha-D-Man-(1-&gt;2)-alpha-D-Man-(1-&gt;6)]-alpha-D-Man-(1-&gt;6)]-beta-D-Man-(1-&gt;4)-beta-D-GlcNAc-(1-&gt;4)-beta-D-GlcNAc)-L-asparaginyl-[protein] (N-glucan mannose isomer 8A1,2,3B1,3) + 3 H2O = N(4)-(alpha-D-Man-(1-&gt;3)-[alpha-D-Man-(1-&gt;3)-[alpha-D-Man-(1-&gt;6)]-alpha-D-Man-(1-&gt;6)]-beta-D-Man-(1-&gt;4)-beta-D-GlcNAc-(1-&gt;4)-beta-D-GlcNAc)-L-asparaginyl-[protein] (N-glucan mannose isomer 5A1,2) + 3 beta-D-mannose. Its pathway is protein modification; protein glycosylation. Its function is as follows. Involved in the maturation of Asn-linked oligosaccharides. Trim a single alpha-1,2-linked mannose residue from Man(9)GlcNAc(2) to produce Man(8)GlcNAc(2). In Candida albicans (Yeast), this protein is Mannosyl-oligosaccharide 1,2-alpha-mannosidase (MNS1).